The primary structure comprises 120 residues: Large ribosomal subunit protein bL12 (120 aa).

It belongs to the bacterial ribosomal protein bL12 family. Homodimer. Part of the ribosomal stalk of the 50S ribosomal subunit. Forms a multimeric L10(L12)X complex, where L10 forms an elongated spine to which 2 to 4 L12 dimers bind in a sequential fashion. Binds GTP-bound translation factors.

Forms part of the ribosomal stalk which helps the ribosome interact with GTP-bound translation factors. Is thus essential for accurate translation. This Lactobacillus acidophilus (strain ATCC 700396 / NCK56 / N2 / NCFM) protein is Large ribosomal subunit protein bL12.